Consider the following 96-residue polypeptide: Co-chaperonin GroES (96 aa).

This sequence belongs to the GroES chaperonin family. As to quaternary structure, heptamer of 7 subunits arranged in a ring. Interacts with the chaperonin GroEL.

The protein localises to the cytoplasm. Functionally, together with the chaperonin GroEL, plays an essential role in assisting protein folding. The GroEL-GroES system forms a nano-cage that allows encapsulation of the non-native substrate proteins and provides a physical environment optimized to promote and accelerate protein folding. GroES binds to the apical surface of the GroEL ring, thereby capping the opening of the GroEL channel. The protein is Co-chaperonin GroES of Buchnera aphidicola subsp. Schizaphis graminum (strain Sg).